We begin with the raw amino-acid sequence, 213 residues long: Dephospho-CoA kinase (213 aa).

Positions 3–202 (RIGLTGGIGS…QSYLALADKH (200 aa)) constitute a DPCK domain. 11-16 (GSGKTR) is a binding site for ATP.

Belongs to the CoaE family.

The protein localises to the cytoplasm. The enzyme catalyses 3'-dephospho-CoA + ATP = ADP + CoA + H(+). The protein operates within cofactor biosynthesis; coenzyme A biosynthesis; CoA from (R)-pantothenate: step 5/5. Its function is as follows. Catalyzes the phosphorylation of the 3'-hydroxyl group of dephosphocoenzyme A to form coenzyme A. The protein is Dephospho-CoA kinase of Bordetella avium (strain 197N).